Reading from the N-terminus, the 764-residue chain is Complement factor B (764 aa).

The first 25 residues, 1 to 25, serve as a signal peptide directing secretion; the sequence is MGSNLSPQLCLMPFILGLLSGGVTT. Sushi domains lie at 35–100, 101–160, and 163–220; these read GSCS…ECRA, IHCP…ICDN, and GYCS…SCQD. 6 disulfides stabilise this stretch: C37–C76, C62–C98, C103–C145, C131–C158, C165–C205, and C191–C218. Residues N122 and N142 are each glycosylated (N-linked (GlcNAc...) asparagine). The VWFA domain occupies 270–469; the sequence is NIYLVLDGSD…NLEDVFYQMI (200 aa). Residues S278 and S280 each contribute to the Mg(2+) site. Positions 278 and 280 each coordinate Mn(2+). N-linked (GlcNAc...) asparagine glycosylation occurs at N285. K291 carries an N-linked (Glc) (glycation) lysine glycan. T353 contributes to the Mg(2+) binding site. T353 provides a ligand contact to Mn(2+). A glycan (N-linked (GlcNAc...) asparagine) is linked at N378. The Peptidase S1 domain occupies 477–757; sequence LCGMVWEHRK…VLPWLKEKLQ (281 aa). 5 cysteine pairs are disulfide-bonded: C478–C596, C511–C527, C599–C615, C656–C682, and C695–C725. Catalysis depends on charge relay system residues H526 and D576. The active-site Charge relay system is S699.

The protein belongs to the peptidase S1 family. As to quaternary structure, monomer. Interacts with complement C3b; this interaction is dependent on the presence of Mg(2+). Catalytic component of the C3 convertase of the alternative complement pathway, also named C3bBb, composed of complement factor B Bb and complement C3b. Catalytic component of the C5 convertase of the alternative complement pathway, also named C3bBb3b, composed of complement factor B Bb and additional molecules of complement C3b. Interacts to CFP; this interaction contributes to the stabilization of the active C3-convertase enzyme complex. The cofactor is Mg(2+). It depends on Mn(2+) as a cofactor. Post-translationally, cleaved by CFD following activation of the alternative complement system, generating Ba and Bb chains. Cleavage and activation takes place when CFB is already associated with complement C3b.

The protein resides in the secreted. Its subcellular location is the cell surface. The catalysed reaction is Cleavage of Arg-|-Ser bond in complement component C3 alpha-chain to yield C3a and C3b, and Arg-|-Xaa bond in complement component C5 alpha-chain to yield C5a and C5b.. In terms of biological role, precursor of the catalytic component of the C3 and C5 convertase complexes of the alternative pathway of the complement system, a cascade of proteins that leads to phagocytosis and breakdown of pathogens and signaling that strengthens the adaptive immune system. The alternative complement pathway acts as an amplification loop that enhances other complement pathways (classical, lectin and GZMK) by promoting formation of additional C3 and C5 convertases. CFB is cleaved and activated by CFD to generate Ba and Bb chains; Bb chain constituting the catalytic component of the C3 and C5 convertases. Serine protease component of the complement C3 and C5 convertase complexes of the alternative complement pathway. Following cleavage and activation by factor D (CFD), forms the C3 convertase together with complement C3b. As part of the C3 convertase, cleaves and activates C3 into C3a anaphylatoxin and C3b opsonin, the next components of the complement pathways. When an additional complement C3b molecule binds to the C3 convertase, forms the C5 convertase, which cleaves and activates C5 into C5a anaphylatoxin and C5b component of the membrane attack complex. Functionally, involved in proliferation and differentiation of preactivated B-lymphocytes, rapid spreading of peripheral blood monocytes, stimulation of lymphocyte blastogenesis and lysis of erythrocytes. This is Complement factor B from Homo sapiens (Human).